Here is a 643-residue protein sequence, read N- to C-terminus: Arginine--tRNA ligase, mitochondrial (643 aa).

Positions 188–198 match the 'HIGH' region motif; the sequence is PNIAKPFHAGH.

The protein belongs to the class-I aminoacyl-tRNA synthetase family.

The protein localises to the mitochondrion matrix. The enzyme catalyses tRNA(Arg) + L-arginine + ATP = L-arginyl-tRNA(Arg) + AMP + diphosphate. The sequence is that of Arginine--tRNA ligase, mitochondrial (MSR1) from Saccharomyces cerevisiae (strain ATCC 204508 / S288c) (Baker's yeast).